The sequence spans 42 residues: Thymosin beta-10 (42 aa).

2 stretches are compositionally biased toward basic and acidic residues: residues Met-1 to Glu-25 and Glu-33 to Lys-42. The interval Met-1 to Lys-42 is disordered. Residue Ala-2 is modified to N-acetylalanine. Position 4 is an N6-acetyllysine (Lys-4). Ser-12 is subject to Phosphoserine. The residue at position 15 (Lys-15) is an N6-acetyllysine. A phosphothreonine mark is found at Thr-21, Thr-23, and Thr-34. Lys-39 is modified (N6-acetyllysine).

Belongs to the thymosin beta family. As to expression, distributed in numerous types of tissues, including thymus, spleen, lung, liver and muscle.

It is found in the cytoplasm. Its subcellular location is the cytoskeleton. Plays an important role in the organization of the cytoskeleton. Binds to and sequesters actin monomers (G actin) and therefore inhibits actin polymerization. The chain is Thymosin beta-10 (TMSB10) from Bos taurus (Bovine).